The sequence spans 278 residues: Ribosomal RNA small subunit methyltransferase A (278 aa).

Positions 25, 27, 52, 73, 97, and 117 each coordinate S-adenosyl-L-methionine.

It belongs to the class I-like SAM-binding methyltransferase superfamily. rRNA adenine N(6)-methyltransferase family. RsmA subfamily.

The protein resides in the cytoplasm. It catalyses the reaction adenosine(1518)/adenosine(1519) in 16S rRNA + 4 S-adenosyl-L-methionine = N(6)-dimethyladenosine(1518)/N(6)-dimethyladenosine(1519) in 16S rRNA + 4 S-adenosyl-L-homocysteine + 4 H(+). Functionally, specifically dimethylates two adjacent adenosines (A1518 and A1519) in the loop of a conserved hairpin near the 3'-end of 16S rRNA in the 30S particle. May play a critical role in biogenesis of 30S subunits. This Desulfitobacterium hafniense (strain DSM 10664 / DCB-2) protein is Ribosomal RNA small subunit methyltransferase A.